Consider the following 555-residue polypeptide: CTP synthase (555 aa).

The interval 1-265 (MTRYIFITGG…GNRVCEKLNI (265 aa)) is amidoligase domain. A CTP-binding site is contributed by Ser-13. Residue Ser-13 coordinates UTP. Residues 14-19 (SLGKGI) and Asp-71 contribute to the ATP site. The Mg(2+) site is built by Asp-71 and Glu-139. CTP-binding positions include 146-148 (DIE), 186-191 (KTKPTQ), and Lys-222. Residues 186 to 191 (KTKPTQ) and Lys-222 each bind UTP. The region spanning 290–541 (TVAVVGKYVD…IKAGLAAKEA (252 aa)) is the Glutamine amidotransferase type-1 domain. Gly-351 serves as a coordination point for L-glutamine. Cys-378 serves as the catalytic Nucleophile; for glutamine hydrolysis. Residues 379–382 (LGMQ), Glu-402, and Arg-469 each bind L-glutamine. Catalysis depends on residues His-514 and Glu-516.

Belongs to the CTP synthase family. Homotetramer.

The enzyme catalyses UTP + L-glutamine + ATP + H2O = CTP + L-glutamate + ADP + phosphate + 2 H(+). It carries out the reaction L-glutamine + H2O = L-glutamate + NH4(+). It catalyses the reaction UTP + NH4(+) + ATP = CTP + ADP + phosphate + 2 H(+). The protein operates within pyrimidine metabolism; CTP biosynthesis via de novo pathway; CTP from UDP: step 2/2. With respect to regulation, allosterically activated by GTP, when glutamine is the substrate; GTP has no effect on the reaction when ammonia is the substrate. The allosteric effector GTP functions by stabilizing the protein conformation that binds the tetrahedral intermediate(s) formed during glutamine hydrolysis. Inhibited by the product CTP, via allosteric rather than competitive inhibition. Its function is as follows. Catalyzes the ATP-dependent amination of UTP to CTP with either L-glutamine or ammonia as the source of nitrogen. Regulates intracellular CTP levels through interactions with the four ribonucleotide triphosphates. This is CTP synthase from Coxiella burnetii (strain CbuG_Q212) (Coxiella burnetii (strain Q212)).